The primary structure comprises 67 residues: Protein AaeX (67 aa).

The next 2 membrane-spanning stretches (helical) occupy residues 3–23 and 43–63; these read LFPVIVIFGLSFPPIFFELLL and FVWHPALFNTALYCCLFYLLS.

It belongs to the AaeX family.

The protein resides in the cell membrane. The protein is Protein AaeX of Cronobacter sakazakii (strain ATCC BAA-894) (Enterobacter sakazakii).